Reading from the N-terminus, the 494-residue chain is Alpha-amylase-related protein (494 aa).

The signal sequence occupies residues methionine 1 to alanine 20. The residue at position 21 (glutamine 21) is a Pyrrolidone carboxylic acid. Cysteine 48 and cysteine 104 are joined by a disulfide. Residues asparagine 118, glutamine 169, and aspartate 178 each contribute to the Ca(2+) site. Cysteine 157 and cysteine 171 are joined by a disulfide. Arginine 206 is a binding site for chloride. The active-site Nucleophile is aspartate 208. Histidine 212 lines the Ca(2+) pocket. Residue glutamate 245 is the Proton donor of the active site. The chloride site is built by asparagine 308 and arginine 343. 3 disulfide bridges follow: cysteine 376–cysteine 382, cysteine 418–cysteine 441, and cysteine 448–cysteine 460.

It belongs to the glycosyl hydrolase 13 family. In terms of assembly, monomer. It depends on Ca(2+) as a cofactor. Requires chloride as cofactor.

The protein localises to the secreted. It catalyses the reaction Endohydrolysis of (1-&gt;4)-alpha-D-glucosidic linkages in polysaccharides containing three or more (1-&gt;4)-alpha-linked D-glucose units.. The sequence is that of Alpha-amylase-related protein (Amyrel) from Drosophila atripex (Fruit fly).